The chain runs to 562 residues: Protein FAM83D-A (562 aa).

The tract at residues 424–471 (ITTQTTETSQCTTQTPAPTSSVARLSNSSNSSSSSFSSTSITSTGSNC) is disordered. Residues 425–471 (TTQTTETSQCTTQTPAPTSSVARLSNSSNSSSSSFSSTSITSTGSNC) are compositionally biased toward low complexity.

It belongs to the FAM83 family.

The protein resides in the cytoplasm. Its subcellular location is the cytoskeleton. The protein localises to the spindle. It is found in the spindle pole. In terms of biological role, may regulate cell proliferation, growth, migration and epithelial to mesenchymal transition. May also be important for proper chromosome congression and alignment during mitosis. The chain is Protein FAM83D-A from Xenopus laevis (African clawed frog).